A 137-amino-acid polypeptide reads, in one-letter code: Cofilin-1A (137 aa).

Positions 2–135 constitute an ADF-H domain; sequence SSGIALAPNC…KDSCFYEKCT (134 aa).

It belongs to the actin-binding proteins ADF family.

It localises to the nucleus matrix. The protein resides in the cytoplasm. The protein localises to the cytoskeleton. Functionally, controls reversibly actin polymerization and depolymerization in a pH-sensitive manner. It has the ability to bind G- and F-actin in a 1:1 ratio of cofilin to actin. It is the major component of intranuclear and cytoplasmic actin rods. The protein is Cofilin-1A (cofA) of Dictyostelium discoideum (Social amoeba).